The chain runs to 216 residues: Large ribosomal subunit protein uL3 (216 aa).

Q157 carries the post-translational modification N5-methylglutamine.

This sequence belongs to the universal ribosomal protein uL3 family. In terms of assembly, part of the 50S ribosomal subunit. Forms a cluster with proteins L14 and L19. Post-translationally, methylated by PrmB.

Functionally, one of the primary rRNA binding proteins, it binds directly near the 3'-end of the 23S rRNA, where it nucleates assembly of the 50S subunit. This Xanthomonas oryzae pv. oryzae (strain MAFF 311018) protein is Large ribosomal subunit protein uL3.